We begin with the raw amino-acid sequence, 21 residues long: Venom nerve growth factor Bco12 (21 aa).

This sequence belongs to the NGF-beta family. As to quaternary structure, homodimer; non-covalently linked. In terms of processing, glycosylated. In terms of tissue distribution, expressed by the venom gland.

The protein resides in the secreted. In terms of biological role, nerve growth factor is important for the development and maintenance of the sympathetic and sensory nervous systems. It stimulates division and differentiation of sympathetic and embryonic sensory neurons as well as basal forebrain cholinergic neurons in the brain. Its relevance in the snake venom is not clear. However, it has been shown to inhibit metalloproteinase-dependent proteolysis of platelet glycoprotein Ib alpha, suggesting a metalloproteinase inhibition to prevent metalloprotease autodigestion and/or protection against prey proteases. Binds a lipid between the two protein chains in the homodimer. The lipid-bound form promotes histamine relase from mouse mast cells, contrary to the lipid-free form. The sequence is that of Venom nerve growth factor Bco12 from Bothrops cotiara (Cotiara).